The primary structure comprises 267 residues: Indole-3-glycerol phosphate synthase (267 aa).

Belongs to the TrpC family.

The catalysed reaction is 1-(2-carboxyphenylamino)-1-deoxy-D-ribulose 5-phosphate + H(+) = (1S,2R)-1-C-(indol-3-yl)glycerol 3-phosphate + CO2 + H2O. It participates in amino-acid biosynthesis; L-tryptophan biosynthesis; L-tryptophan from chorismate: step 4/5. This is Indole-3-glycerol phosphate synthase from Deinococcus radiodurans (strain ATCC 13939 / DSM 20539 / JCM 16871 / CCUG 27074 / LMG 4051 / NBRC 15346 / NCIMB 9279 / VKM B-1422 / R1).